A 107-amino-acid polypeptide reads, in one-letter code: UPF0060 membrane protein A1S_1909 (107 aa).

The next 4 membrane-spanning stretches (helical) occupy residues 2-22 (FGLF…PYLI), 28-48 (SAWL…LLTL), 56-76 (IYAA…RFVD), and 85-105 (ILGG…PQGL).

The protein belongs to the UPF0060 family.

Its subcellular location is the cell inner membrane. The polypeptide is UPF0060 membrane protein A1S_1909 (Acinetobacter baumannii (strain ATCC 17978 / DSM 105126 / CIP 53.77 / LMG 1025 / NCDC KC755 / 5377)).